Here is a 413-residue protein sequence, read N- to C-terminus: Serine/threonine transporter SstT (413 aa).

9 consecutive transmembrane segments (helical) span residues 15-35, 48-68, 82-102, 141-161, 178-198, 216-236, 290-310, 330-350, and 357-377; these read NIVI…TLAP, FVSA…AASI, VIVL…VMSF, ALMT…GLGL, CISA…FGLV, LLAV…PLIV, IPLG…VLTL, LVAA…LLLI, and FGIS…IGVV.

Belongs to the dicarboxylate/amino acid:cation symporter (DAACS) (TC 2.A.23) family.

It localises to the cell inner membrane. It catalyses the reaction L-serine(in) + Na(+)(in) = L-serine(out) + Na(+)(out). It carries out the reaction L-threonine(in) + Na(+)(in) = L-threonine(out) + Na(+)(out). In terms of biological role, involved in the import of serine and threonine into the cell, with the concomitant import of sodium (symport system). The sequence is that of Serine/threonine transporter SstT from Aliivibrio fischeri (strain ATCC 700601 / ES114) (Vibrio fischeri).